Here is a 53-residue protein sequence, read N- to C-terminus: uncharacterized protein (53 aa).

The segment covering 1-10 has biased composition (polar residues); that stretch reads MHILTRSSKN. The segment at 1 to 25 is disordered; that stretch reads MHILTRSSKNAFPRSRSRQDIHISS.

This is an uncharacterized protein from Saccharomyces cerevisiae (strain ATCC 204508 / S288c) (Baker's yeast).